The sequence spans 877 residues: MDSLITIVNKLQDAFTSLGVHMQLDLPQIAVVGGQSAGKSSVLENFVGKDFLPRGSGIVTRRPLILQLINGVTEYGEFLHIKGKKFSSFDEIRKEIEDETDRVTGSNKGISNIPINLRVYSPHVLNLTLIDLPGLTKVAIGDQPVDIEQQIKQMIFQFIRKETCLILAVTPANTDLANSDALKLAKEVDPQGVRTIGVITKLDLMDEGTDARDILENKLLPLRRGYIGVVNRSQKDIEGRKDIHQALAAERKFFLSHPSYRHMADRLGTPYLQRVLNQQLTNHIRDTLPGLRDKLQKQMLTLEKEVEEFKHFQPGDASIKTKAMLQMIQQLQSDFERTIEGSGSALVNTNELSGGAKINRIFHERLRFEIVKMACDEKELRREISFAIRNIHGIRVGLFTPDMAFEAIVKRQIALLKEPVIKCVDLVVQELSVVVRMCTAKMSRYPRLREETERIITTHVRQREHSCKEQILLLIDFELAYMNTNHEDFIGFANAQNKSENANKTGTRQLGNQVIRKGHMVIQNLGIMKGGSRPYWFVLTSESISWYKDEDEKEKKFMLPLDGLKLRDIEQGFMSMSRRVTFALFSPDGRNVYKDYKQLELSCETVEDVESWKASFLRAGVYPEKQETQENGDESASEESSSDPQLERQVETIRNLVDSYMKIVTKTTRDMVPKAIMMLIINNAKDFINGELLAHLYASGDQAQMMEESAESATRREEMLRMYRACKDALQIIGDVSMATVSSPLPPPVKNDWLPSGLDNPRLSPPSPGGVRGKPGPPAQSSLGGRNPPLPPSTGRPAPAIPNRPGGGAPPLPGGRPGGSLPPPMLPSRVSGAVGGAIVQQSGANRYVPESMRGQVNQAVGQAAINELSNAFSSRFK.

The region spanning 23–289 (QLDLPQIAVV…LTNHIRDTLP (267 aa)) is the Dynamin-type G domain. Residues 33 to 40 (GGQSAGKS) are G1 motif. Position 33 to 41 (33 to 41 (GGQSAGKSS)) interacts with GTP. The tract at residues 59 to 61 (VTR) is G2 motif. The tract at residues 131–134 (DLPG) is G3 motif. A G4 motif region spans residues 200 to 203 (TKLD). Residues 200-206 (TKLDLMD) and 231-234 (NRSQ) contribute to the GTP site. A G5 motif region spans residues 230–233 (VNRS). A PH domain is found at 513–621 (QVIRKGHMVI…WKASFLRAGV (109 aa)). Disordered stretches follow at residues 623-648 (PEKQ…QLER) and 740-834 (TVSS…SGAV). Residues 630–641 (ENGDESASEESS) are compositionally biased toward acidic residues. One can recognise a GED domain in the interval 650–741 (VETIRNLVDS…IIGDVSMATV (92 aa)). A phosphoserine mark is found at Ser-756, Ser-764, and Ser-767. Residues 788–826 (PPLPPSTGRPAPAIPNRPGGGAPPLPGGRPGGSLPPPML) show a composition bias toward pro residues.

Belongs to the TRAFAC class dynamin-like GTPase superfamily. Dynamin/Fzo/YdjA family.

It is found in the cytoplasm. Its subcellular location is the cytoskeleton. It carries out the reaction GTP + H2O = GDP + phosphate + H(+). In terms of biological role, microtubule-associated force-producing protein which is involved in the production of microtubule bundles and which is able to bind and hydrolyze GTP. Implicated in endocytic protein sorting. The chain is Dynamin (shi) from Drosophila melanogaster (Fruit fly).